A 293-amino-acid chain; its full sequence is ATP synthase gamma chain (293 aa).

Belongs to the ATPase gamma chain family. As to quaternary structure, F-type ATPases have 2 components, CF(1) - the catalytic core - and CF(0) - the membrane proton channel. CF(1) has five subunits: alpha(3), beta(3), gamma(1), delta(1), epsilon(1). CF(0) has three main subunits: a, b and c.

The protein resides in the cell membrane. Produces ATP from ADP in the presence of a proton gradient across the membrane. The gamma chain is believed to be important in regulating ATPase activity and the flow of protons through the CF(0) complex. The polypeptide is ATP synthase gamma chain (Streptococcus gordonii (strain Challis / ATCC 35105 / BCRC 15272 / CH1 / DL1 / V288)).